We begin with the raw amino-acid sequence, 415 residues long: Coenzyme F420 hydrogenase subunit alpha (415 aa).

Ni(2+)-binding residues include cysteine 68, cysteine 71, cysteine 391, and cysteine 394.

This sequence belongs to the [NiFe]/[NiFeSe] hydrogenase large subunit family. In terms of assembly, heterocomplex of the form (alpha(1)beta(1)gamma(1))(8). Ni(2+) is required as a cofactor. It depends on iron-sulfur cluster as a cofactor. FAD serves as cofactor.

The enzyme catalyses oxidized coenzyme F420-(gamma-L-Glu)(n) + H2 + H(+) = reduced coenzyme F420-(gamma-L-Glu)(n). Reduces the physiological low-potential two-electron acceptor coenzyme F420, and the artificial one-electron acceptor methylviologen. The polypeptide is Coenzyme F420 hydrogenase subunit alpha (frhA) (Methanocaldococcus jannaschii (strain ATCC 43067 / DSM 2661 / JAL-1 / JCM 10045 / NBRC 100440) (Methanococcus jannaschii)).